A 302-amino-acid chain; its full sequence is Protoheme IX farnesyltransferase (302 aa).

The next 9 helical transmembrane spans lie at 26 to 46, 48 to 68, 98 to 118, 120 to 140, 148 to 168, 174 to 194, 221 to 241, 244 to 264, and 280 to 300; these read VVVLMVFTAIVGMFLASPGQV, WVALTVGSLGIALAAGSAAAL, VLGFSSLLGVAGLGMLALWIN, LTAALTFASLIGYALVYTLYL, IVIGGAAGAAPPLLGWTAVTG, ALLLFLIVFVWTPPHFWALAV, ILLYTVLLLAVSLLPWATFMG, LYLAAAVGLGGWYLMLNVRLL, and IIYLFGLFAALLVDRQLPVWL.

Belongs to the UbiA prenyltransferase family. Protoheme IX farnesyltransferase subfamily.

Its subcellular location is the cell inner membrane. The enzyme catalyses heme b + (2E,6E)-farnesyl diphosphate + H2O = Fe(II)-heme o + diphosphate. It functions in the pathway porphyrin-containing compound metabolism; heme O biosynthesis; heme O from protoheme: step 1/1. In terms of biological role, converts heme B (protoheme IX) to heme O by substitution of the vinyl group on carbon 2 of heme B porphyrin ring with a hydroxyethyl farnesyl side group. In Alkalilimnicola ehrlichii (strain ATCC BAA-1101 / DSM 17681 / MLHE-1), this protein is Protoheme IX farnesyltransferase.